The following is a 216-amino-acid chain: Large ribosomal subunit protein bL25 (216 aa).

Residues 184-216 (VPPTSDVEEEEGDEDLEEDVEETAAEEEEGVEE) form a disordered region. Residues 189 to 216 (DVEEEEGDEDLEEDVEETAAEEEEGVEE) are compositionally biased toward acidic residues.

This sequence belongs to the bacterial ribosomal protein bL25 family. CTC subfamily. In terms of assembly, part of the 50S ribosomal subunit; part of the 5S rRNA/L5/L18/L25 subcomplex. Contacts the 5S rRNA. Binds to the 5S rRNA independently of L5 and L18.

In terms of biological role, this is one of the proteins that binds to the 5S RNA in the ribosome where it forms part of the central protuberance. This chain is Large ribosomal subunit protein bL25, found in Desulforapulum autotrophicum (strain ATCC 43914 / DSM 3382 / VKM B-1955 / HRM2) (Desulfobacterium autotrophicum).